Here is a 339-residue protein sequence, read N- to C-terminus: Cathepsin B (339 aa).

Residues 1–17 form the signal peptide; the sequence is MWWSLILLSCLLALTSA. Residues 18-79 constitute a propeptide, activation peptide; sequence HDKPSFHPLS…GRVAFGEDID (62 aa). Intrachain disulfides connect cysteine 93–cysteine 122, cysteine 105–cysteine 150, cysteine 141–cysteine 207, cysteine 142–cysteine 146, cysteine 179–cysteine 211, and cysteine 187–cysteine 198. Cysteine 108 is a catalytic residue. The N-linked (GlcNAc...) asparagine glycan is linked to asparagine 192. An N6-acetyllysine modification is found at lysine 220. Residues histidine 278 and asparagine 298 contribute to the active site. The propeptide occupies 334–339; that stretch reads QYWGRF.

The protein belongs to the peptidase C1 family. Dimer of a heavy chain and a light chain cross-linked by a disulfide bond. Interacts with SRPX2. Directly interacts with SHKBP1. Expressed in thyroid epithelial cells.

The protein localises to the lysosome. It localises to the melanosome. The protein resides in the secreted. Its subcellular location is the extracellular space. It is found in the apical cell membrane. The enzyme catalyses Hydrolysis of proteins with broad specificity for peptide bonds. Preferentially cleaves -Arg-Arg-|-Xaa bonds in small molecule substrates (thus differing from cathepsin L). In addition to being an endopeptidase, shows peptidyl-dipeptidase activity, liberating C-terminal dipeptides.. Thiol protease which is believed to participate in intracellular degradation and turnover of proteins. Cleaves matrix extracellular phosphoglycoprotein MEPE. Involved in the solubilization of cross-linked TG/thyroglobulin in the thyroid follicle lumen. Has also been implicated in tumor invasion and metastasis. The polypeptide is Cathepsin B (Ctsb) (Mus musculus (Mouse)).